Here is a 447-residue protein sequence, read N- to C-terminus: Tubulin beta-5 chain (447 aa).

Residues Q11, E69, S138, G142, T143, G144, N204, and N226 each coordinate GTP. Position 69 (E69) interacts with Mg(2+).

This sequence belongs to the tubulin family. In terms of assembly, dimer of alpha and beta chains. A typical microtubule is a hollow water-filled tube with an outer diameter of 25 nm and an inner diameter of 15 nM. Alpha-beta heterodimers associate head-to-tail to form protofilaments running lengthwise along the microtubule wall with the beta-tubulin subunit facing the microtubule plus end conferring a structural polarity. Microtubules usually have 13 protofilaments but different protofilament numbers can be found in some organisms and specialized cells. It depends on Mg(2+) as a cofactor.

It is found in the cytoplasm. The protein resides in the cytoskeleton. In terms of biological role, tubulin is the major constituent of microtubules, a cylinder consisting of laterally associated linear protofilaments composed of alpha- and beta-tubulin heterodimers. Microtubules grow by the addition of GTP-tubulin dimers to the microtubule end, where a stabilizing cap forms. Below the cap, tubulin dimers are in GDP-bound state, owing to GTPase activity of alpha-tubulin. The chain is Tubulin beta-5 chain (TUBB5) from Triticum aestivum (Wheat).